The following is a 533-amino-acid chain: Retinoic acid receptor RXR-beta (533 aa).

A disordered region spans residues 1 to 23 (MSWAARPPFLPQRHAAGQCGPVG). The interval 1–204 (MSWAARPPFL…PGGPGAGKRL (204 aa)) is modulating. Arginine 25 bears the Omega-N-methylarginine mark. The tract at residues 36-181 (WRRRRPWLDP…GSGPPEDVKP (146 aa)) is disordered. Residues 46–61 (AAAAAAAVAGGEQQTP) are compositionally biased toward low complexity. Positions 67–82 (EAGRDGMGDSGRDSRS) are enriched in basic and acidic residues. Pro residues-rich tracts occupy residues 89–109 (NPLP…PPST) and 118–131 (APPP…PLGS). The span at 132 to 143 (PFPVISSSMGSP) shows a compositional bias: low complexity. Pro residues predominate over residues 144–153 (GLPPPAPPGF). 2 consecutive NR C4-type zinc fingers follow at residues 205 to 225 (CAIC…CEGC) and 241 to 265 (CRDN…YQKC). The segment at residues 205–270 (CAICGDRSSG…RYQKCLATGM (66 aa)) is a DNA-binding region (nuclear receptor). The tract at residues 271–295 (KREAVQEERQRGKDKDGDGEGAGGA) is hinge. Residues 276–288 (QEERQRGKDKDGD) show a composition bias toward basic and acidic residues. Disordered regions lie at residues 276 to 299 (QEER…PEEM) and 313 to 336 (QKSD…NDPV). The NR LBD domain occupies 296–529 (PEEMPVDRIL…TFLMEMLEAP (234 aa)). The span at 320 to 329 (EGPGGTGGSG) shows a compositional bias: gly residues.

Belongs to the nuclear hormone receptor family. NR2 subfamily. In terms of assembly, homodimer (in vitro). Heterodimer with other retinoic acid receptor family members. Binds DNA preferentially as a RAR/RXR heterodimer. Interacts with NR1H3. Interacts with AKAP13. In terms of tissue distribution, expressed in aortic endothelial cells (at protein level). Expressed in monocytes. Expressed in a variety of tumor cell lines.

The protein localises to the nucleus. It is found in the cytoplasm. Functionally, receptor for retinoic acid. Retinoic acid receptors bind as heterodimers to their target response elements in response to their ligands, all-trans or 9-cis retinoic acid, and regulate gene expression in various biological processes. The RAR/RXR heterodimers bind to the retinoic acid response elements (RARE). The chain is Retinoic acid receptor RXR-beta (RXRB) from Homo sapiens (Human).